The primary structure comprises 420 residues: Tyrosine--tRNA ligase (420 aa).

Y36 contributes to the L-tyrosine binding site. Residues 41-50 (PTADSLHIGH) carry the 'HIGH' region motif. Positions 170 and 174 each coordinate L-tyrosine. A 'KMSKS' region motif is present at residues 231 to 235 (KFGKS). K234 is a binding site for ATP. One can recognise an S4 RNA-binding domain in the interval 353–420 (TNIVEVLIET…KKKYFMVNYQ (68 aa)).

It belongs to the class-I aminoacyl-tRNA synthetase family. TyrS type 1 subfamily. Homodimer.

It is found in the cytoplasm. It catalyses the reaction tRNA(Tyr) + L-tyrosine + ATP = L-tyrosyl-tRNA(Tyr) + AMP + diphosphate + H(+). In terms of biological role, catalyzes the attachment of tyrosine to tRNA(Tyr) in a two-step reaction: tyrosine is first activated by ATP to form Tyr-AMP and then transferred to the acceptor end of tRNA(Tyr). In Staphylococcus aureus (strain COL), this protein is Tyrosine--tRNA ligase.